The primary structure comprises 370 residues: Glutathione S-transferase omega-like 2 (370 aa).

Arginine 15 contributes to the glutathione binding site. The active-site Nucleophile is the cysteine 46. Residues tryptophan 79, arginine 155, valine 158, glutamate 173, and serine 174 each contribute to the glutathione site. Residues proline 201–isoleucine 353 form the GST C-terminal domain.

Belongs to the GST superfamily. Omega family. Homodimer.

The protein localises to the cytoplasm. It catalyses the reaction RX + glutathione = an S-substituted glutathione + a halide anion + H(+). The catalysed reaction is L-dehydroascorbate + 2 glutathione = glutathione disulfide + L-ascorbate. In terms of biological role, active as '1-Cys' thiol transferase against beta-hydroxyethyl disulfide (HED), as dehydroascorbate reductase and as dimethylarsinic acid reductase, while not active against the standard GST substrate 1-chloro-2,4-dinitrobenzene (CDNB). May be involved in cell wall organization and biogenesis. The sequence is that of Glutathione S-transferase omega-like 2 from Saccharomyces cerevisiae (strain ATCC 204508 / S288c) (Baker's yeast).